The primary structure comprises 237 residues: Cytidylate kinase (237 aa).

15–23 (GPSGSGKGT) is a binding site for ATP.

The protein belongs to the cytidylate kinase family. Type 1 subfamily.

It is found in the cytoplasm. It carries out the reaction CMP + ATP = CDP + ADP. The enzyme catalyses dCMP + ATP = dCDP + ADP. This Coxiella burnetii (strain RSA 493 / Nine Mile phase I) protein is Cytidylate kinase.